The primary structure comprises 513 residues: ATP synthase subunit alpha 2 (513 aa).

169-176 (GDRQTGKT) is an ATP binding site.

This sequence belongs to the ATPase alpha/beta chains family. As to quaternary structure, F-type ATPases have 2 components, CF(1) - the catalytic core - and CF(0) - the membrane proton channel. CF(1) has five subunits: alpha(3), beta(3), gamma(1), delta(1), epsilon(1). CF(0) has three main subunits: a(1), b(2) and c(9-12). The alpha and beta chains form an alternating ring which encloses part of the gamma chain. CF(1) is attached to CF(0) by a central stalk formed by the gamma and epsilon chains, while a peripheral stalk is formed by the delta and b chains.

Its subcellular location is the cell inner membrane. It catalyses the reaction ATP + H2O + 4 H(+)(in) = ADP + phosphate + 5 H(+)(out). In terms of biological role, produces ATP from ADP in the presence of a proton gradient across the membrane. The alpha chain is a regulatory subunit. The chain is ATP synthase subunit alpha 2 from Pseudoalteromonas atlantica (strain T6c / ATCC BAA-1087).